The following is a 214-amino-acid chain: Probable transaldolase (214 aa).

The active-site Schiff-base intermediate with substrate is the Lys-83.

It belongs to the transaldolase family. Type 3B subfamily.

It localises to the cytoplasm. It carries out the reaction D-sedoheptulose 7-phosphate + D-glyceraldehyde 3-phosphate = D-erythrose 4-phosphate + beta-D-fructose 6-phosphate. Its pathway is carbohydrate degradation; pentose phosphate pathway; D-glyceraldehyde 3-phosphate and beta-D-fructose 6-phosphate from D-ribose 5-phosphate and D-xylulose 5-phosphate (non-oxidative stage): step 2/3. Functionally, transaldolase is important for the balance of metabolites in the pentose-phosphate pathway. In Leptospira biflexa serovar Patoc (strain Patoc 1 / Ames), this protein is Probable transaldolase.